The sequence spans 665 residues: LisH domain-containing protein ARMC9 (665 aa).

A LisH domain is found at 7–39; that stretch reads HESELLGLVKEYLDFAEFEDTLKTFLKECKIKG. Residues 204 to 235 are a coiled coil; that stretch reads QSNKDVLQQLHQQLVEAERRSMTYLKRYNRIQ. The residue at position 582 (Ser582) is a Phosphoserine. Residues 582 to 603 show a composition bias toward acidic residues; that stretch reads SDDDEDEDDEEDHDTMEADLDK. Disordered regions lie at residues 582-604 and 636-665; these read SDDD…LDKD and RRGT…GYPA.

Interacts with TOGARAM1, CCDC66, CEP104, CSPP1 and CEP290. Interacts with NDUFAF2.

The protein resides in the cytoplasm. It is found in the cytoskeleton. Its subcellular location is the cilium basal body. It localises to the cell projection. The protein localises to the cilium. The protein resides in the microtubule organizing center. It is found in the centrosome. Its subcellular location is the centriole. In terms of biological role, involved in ciliogenesis. It is required for appropriate acetylation and polyglutamylation of ciliary microtubules, and regulation of cilium length. Acts as a positive regulator of hedgehog (Hh)signaling. May participate in the trafficking and/or retention of GLI2 and GLI3 proteins at the ciliary tip. The sequence is that of LisH domain-containing protein ARMC9 (ARMC9) from Bos taurus (Bovine).